We begin with the raw amino-acid sequence, 565 residues long: Bicyclogermacrene synthase (565 aa).

Residues D317, D321, D461, and E469 each contribute to the Mg(2+) site. The short motif at 317 to 321 (DDTFD) is the DDXXD motif element.

This sequence belongs to the terpene synthase family. The cofactor is Mg(2+).

The enzyme catalyses (2E,6E)-farnesyl diphosphate = bicyclogermacrene + diphosphate. The protein operates within secondary metabolite biosynthesis; terpenoid biosynthesis. Its function is as follows. Sesquiterpene synthase converting farnesyl diphosphate to bicyclogermacrene as the major product. This chain is Bicyclogermacrene synthase, found in Phyla dulcis (Aztec sweet herb).